The sequence spans 755 residues: LIM domain and actin-binding protein 1 (755 aa).

Met-1 carries the post-translational modification N-acetylmethionine. Residue Ser-15 is modified to Phosphoserine. Over residues 43 to 56 the composition is skewed to basic and acidic residues; sequence KAAEEANMERKKNN. A disordered region spans residues 43–151; sequence KAAEEANMER…YPRSEDSHDF (109 aa). Over residues 88–97 the composition is skewed to polar residues; it reads DSLPNSSSDG. The residue at position 132 (Ser-132) is a Phosphoserine. A Required for interaction with NPC1L1 motif is present at residues 164–166; the sequence is CLG. Basic and acidic residues-rich tracts occupy residues 168–177 and 199–208; these read SRHEAEKPEM and MMFEKGEHSQ. Residues 168 to 226 form a disordered region; sequence SRHEAEKPEMSENTETSGKIEKYNVPLNRLKMMFEKGEHSQNKSPWTQGRNAGGRRLSE. 3 positions are modified to phosphoserine: Ser-225, Ser-230, and Ser-242. The tract at residues 241–379 is disordered; it reads LSSSAFNSEK…ESSPSKTAKK (139 aa). Over residues 249 to 258 the composition is skewed to basic and acidic residues; the sequence is EKNESKRNLE. Residue Ser-263 is modified to Phosphoserine. Basic and acidic residues predominate over residues 292-305; sequence KPSESKTHKWEQKE. The segment covering 342–354 has biased composition (polar residues); it reads CNSQGRSEAQQPI. Residues Ser-348, Ser-360, Ser-367, and Ser-372 each carry the phosphoserine modification. The segment covering 363–375 has biased composition (polar residues); it reads ARTSSLPESSPSK. One can recognise an LIM zinc-binding domain in the interval 386–446; it reads ESCVECQKTV…KPHFNQLFKS (61 aa). Position 437 is an N6-succinyllysine (Lys-437). Disordered stretches follow at residues 468-493 and 505-714; these read ENEE…GVED and SMEA…DTTT. Ser-488 carries the post-translational modification Phosphoserine. The segment at 491 to 511 is required for interaction with MYO5B; the sequence is VEDAPIAKVGVLAASMEAKAS. Basic and acidic residues-rich tracts occupy residues 512–526 and 555–566; these read SQRE…ETKK and WPPEDEVCKTEA. Residues 599–611 show a composition bias toward low complexity; sequence SSVKSPKPLSPSL. 4 positions are modified to phosphoserine: Ser-600, Ser-603, Ser-608, and Ser-616. Basic and acidic residues-rich tracts occupy residues 638–653 and 662–673; these read RPSR…RWQS and EAPRGRDGRSFE. Phosphoserine is present on residues Ser-697, Ser-722, and Ser-737.

In terms of assembly, interacts with NPC1L1; bridges NPC1L1 with MYO5B. Interacts with MYO5B; bridges MYO5B with NPC1L1. Interacts with PXN; this complex stabilizes actin dynamics. Interacts with F-actin and G-actin. Interacts with LUZP1 (via C-terminus); both proteins restrict ciliation and may work together to regulate this process. Binds RAB40B (GTP-bound); interaction influences LIMA1 subcellular localization in lamellipodia during cell migration. Phosphorylation of the C-terminal region by MAPK1/MAPK3 reduces its association with F-actin and contributes to actin filament reorganization and enhanced cell motility. Post-translationally, ubiquitinated by the ECS(RAB40B) complex leading to its degradation. In terms of tissue distribution, expressed throughout the kidney, including renal cortex, medulla, and glomeruli. Expressed in glomeruli, tubular epithelial cells, and extraglomerular vascular endothelial cells (at protein level).

Its subcellular location is the cytoplasm. The protein resides in the cell junction. The protein localises to the focal adhesion. It localises to the cytoskeleton. It is found in the stress fiber. Its subcellular location is the cell membrane. The protein resides in the cell projection. The protein localises to the ruffle. It localises to the lamellipodium. Its function is as follows. Actin-binding protein involved in actin cytoskeleton regulation and dynamics. Increases the number and size of actin stress fibers and inhibits membrane ruffling. Inhibits actin filament depolymerization. Bundles actin filaments, delays filament nucleation and reduces formation of branched filaments. Acts as a negative regulator of primary cilium formation. Plays a role in cholesterol homeostasis. Influences plasma cholesterol levels through regulation of intestinal cholesterol absorption. May act as a scaffold protein by regulating NPC1L1 transportation, an essential protein for cholesterol absorption, to the plasma membrane by recruiting MYO5B to NPC1L1, and thus facilitates cholesterol uptake. This chain is LIM domain and actin-binding protein 1, found in Rattus norvegicus (Rat).